Reading from the N-terminus, the 120-residue chain is Small ribosomal subunit protein bS16 (120 aa).

A disordered region spans residues 80-120; the sequence is GLKKRPARNNPHKGEPGKKAQERIAAAKQAAEDAKAAEASA. Residues 81 to 90 are compositionally biased toward basic residues; that stretch reads LKKRPARNNP. Composition is skewed to basic and acidic residues over residues 91–101 and 109–120; these read HKGEPGKKAQE and AAEDAKAAEASA.

The protein belongs to the bacterial ribosomal protein bS16 family.

The chain is Small ribosomal subunit protein bS16 from Bartonella bacilliformis (strain ATCC 35685 / KC583 / Herrer 020/F12,63).